We begin with the raw amino-acid sequence, 221 residues long: Deoxyribose-phosphate aldolase (221 aa).

Asp91 (proton donor/acceptor) is an active-site residue. The active-site Schiff-base intermediate with acetaldehyde is Lys153. Lys182 (proton donor/acceptor) is an active-site residue.

This sequence belongs to the DeoC/FbaB aldolase family. DeoC type 1 subfamily.

Its subcellular location is the cytoplasm. The catalysed reaction is 2-deoxy-D-ribose 5-phosphate = D-glyceraldehyde 3-phosphate + acetaldehyde. The protein operates within carbohydrate degradation; 2-deoxy-D-ribose 1-phosphate degradation; D-glyceraldehyde 3-phosphate and acetaldehyde from 2-deoxy-alpha-D-ribose 1-phosphate: step 2/2. Its function is as follows. Catalyzes a reversible aldol reaction between acetaldehyde and D-glyceraldehyde 3-phosphate to generate 2-deoxy-D-ribose 5-phosphate. The protein is Deoxyribose-phosphate aldolase of Clostridium botulinum (strain Eklund 17B / Type B).